A 91-amino-acid chain; its full sequence is Probable Fe(2+)-trafficking protein (91 aa).

The protein belongs to the Fe(2+)-trafficking protein family.

Functionally, could be a mediator in iron transactions between iron acquisition and iron-requiring processes, such as synthesis and/or repair of Fe-S clusters in biosynthetic enzymes. The chain is Probable Fe(2+)-trafficking protein from Xanthomonas axonopodis pv. citri (strain 306).